Consider the following 245-residue polypeptide: Ribonuclease 3 (245 aa).

Residues F17–G146 form the RNase III domain. Residue E59 coordinates Mg(2+). D63 is a catalytic residue. Mg(2+) is bound by residues D132 and E135. The active site involves E135. The 70-residue stretch at D172 to N241 folds into the DRBM domain.

It belongs to the ribonuclease III family. In terms of assembly, homodimer. Mg(2+) serves as cofactor.

It localises to the cytoplasm. It carries out the reaction Endonucleolytic cleavage to 5'-phosphomonoester.. Functionally, digests double-stranded RNA. Involved in the processing of primary rRNA transcript to yield the immediate precursors to the large and small rRNAs (23S and 16S). Processes some mRNAs, and tRNAs when they are encoded in the rRNA operon. Processes pre-crRNA and tracrRNA of type II CRISPR loci if present in the organism. This chain is Ribonuclease 3, found in Staphylococcus epidermidis (strain ATCC 12228 / FDA PCI 1200).